A 359-amino-acid chain; its full sequence is Peptide chain release factor 1 (359 aa).

The residue at position 236 (glutamine 236) is an N5-methylglutamine.

Belongs to the prokaryotic/mitochondrial release factor family. Methylated by PrmC. Methylation increases the termination efficiency of RF1.

It localises to the cytoplasm. Functionally, peptide chain release factor 1 directs the termination of translation in response to the peptide chain termination codons UAG and UAA. The polypeptide is Peptide chain release factor 1 (Streptococcus pyogenes serotype M6 (strain ATCC BAA-946 / MGAS10394)).